The sequence spans 275 residues: Transmembrane protein 45B (275 aa).

7 helical membrane passes run 7-27 (HALP…KYPL), 47-67 (IVEA…EQFV), 94-114 (LFFA…HVPL), 116-136 (VDRL…YYHV), 146-166 (IHSL…LEVI), 180-200 (LIIL…PPFG), and 212-232 (LMFI…IVAV). A phosphoserine mark is found at Ser-270 and Ser-272.

It belongs to the TMEM45 family. (Microbial infection) Interacts with sindbis virus nsP1 and nsP4; these interactions lead to viral RNA replication inhibition. In terms of assembly, (Microbial infection) Interacts with chikungunya virus nsP1 and nsP4; these interactions lead to viral RNA replication inhibition.

It localises to the endosome membrane. The protein localises to the lysosome membrane. The protein resides in the golgi apparatus. Its subcellular location is the trans-Golgi network membrane. In terms of biological role, plays a role in innate immunity. Mechanistically, promotes alphaviruses RNA degradation by interacting with the viral polymerase nsP4 and the mRNA-capping enzyme nsP1 and thereby interfering with the interaction between viral RNA and nsP1. The protein is Transmembrane protein 45B (TMEM45B) of Homo sapiens (Human).